Here is a 425-residue protein sequence, read N- to C-terminus: Dihydroorotase (425 aa).

Zn(2+)-binding residues include His56 and His58. Residues 58-60 (HYR) and Asn90 each bind substrate. 3 residues coordinate Zn(2+): Asp148, His175, and His228. Asn274 serves as a coordination point for substrate. Position 301 (Asp301) interacts with Zn(2+). Asp301 is a catalytic residue. Residues His305 and 319-320 (FG) contribute to the substrate site.

This sequence belongs to the metallo-dependent hydrolases superfamily. DHOase family. Class I DHOase subfamily. The cofactor is Zn(2+).

The enzyme catalyses (S)-dihydroorotate + H2O = N-carbamoyl-L-aspartate + H(+). The protein operates within pyrimidine metabolism; UMP biosynthesis via de novo pathway; (S)-dihydroorotate from bicarbonate: step 3/3. Catalyzes the reversible cyclization of carbamoyl aspartate to dihydroorotate. The protein is Dihydroorotase of Lactobacillus acidophilus (strain ATCC 700396 / NCK56 / N2 / NCFM).